The following is a 441-amino-acid chain: Glutamate-1-semialdehyde 2,1-aminomutase (441 aa).

Lys275 carries the post-translational modification N6-(pyridoxal phosphate)lysine.

Belongs to the class-III pyridoxal-phosphate-dependent aminotransferase family. HemL subfamily. In terms of assembly, homodimer. Requires pyridoxal 5'-phosphate as cofactor.

The protein localises to the cytoplasm. The enzyme catalyses (S)-4-amino-5-oxopentanoate = 5-aminolevulinate. It participates in porphyrin-containing compound metabolism; protoporphyrin-IX biosynthesis; 5-aminolevulinate from L-glutamyl-tRNA(Glu): step 2/2. This Deinococcus deserti (strain DSM 17065 / CIP 109153 / LMG 22923 / VCD115) protein is Glutamate-1-semialdehyde 2,1-aminomutase.